A 282-amino-acid chain; its full sequence is Phenylethanolamine N-methyltransferase (282 aa).

S7 carries the post-translational modification Phosphoserine. Residues Y35, Y40, 79 to 80 (GS), Y85, D101, N106, 158 to 159 (DV), and A181 contribute to the S-adenosyl-L-methionine site. Octopamine contacts are provided by E219 and D267.

The catalysed reaction is phenylethanolamine + S-adenosyl-L-methionine = N-methylphenylethanolamine + S-adenosyl-L-homocysteine + H(+). It catalyses the reaction (R)-noradrenaline + S-adenosyl-L-methionine = (R)-adrenaline + S-adenosyl-L-homocysteine + H(+). It carries out the reaction (R)-normetanephrine + S-adenosyl-L-methionine = (R)-metanephrine + S-adenosyl-L-homocysteine + H(+). The enzyme catalyses (R)-octopamine + S-adenosyl-L-methionine = (R)-synephrine + S-adenosyl-L-homocysteine + H(+). Its pathway is catecholamine biosynthesis; (R)-adrenaline biosynthesis; (R)-adrenaline from (R)-noradrenaline: step 1/1. Inhibited by methyl methanethiosulfonate, phenylglyoxal, tetranitromethane and diethyl pyrocarbonate. Inhibited by 4-oxo-1,4-dihydro-quinoline-3,7-dicarboxylic acid, 4-(benzo[d][1,3]dioxol-5-ylamino)-4-oxobutanoic acid and 1,4-diaminonaphthalene-2,6-disulfonic acid. Catalyzes the transmethylation of nonepinephrine (noradrenaline) to form epinephrine (adrenaline), using S-adenosyl-L-methionine as the methyl donor. Other substrates include phenylethanolamine and octopamine. Also methylates normetanephrine. This chain is Phenylethanolamine N-methyltransferase (PNMT), found in Homo sapiens (Human).